A 180-amino-acid chain; its full sequence is Large ribosomal subunit protein uL5 (180 aa).

The protein belongs to the universal ribosomal protein uL5 family. As to quaternary structure, part of the 50S ribosomal subunit; part of the 5S rRNA/L5/L18/L25 subcomplex. Contacts the 5S rRNA and the P site tRNA. Forms a bridge to the 30S subunit in the 70S ribosome.

This is one of the proteins that bind and probably mediate the attachment of the 5S RNA into the large ribosomal subunit, where it forms part of the central protuberance. In the 70S ribosome it contacts protein S13 of the 30S subunit (bridge B1b), connecting the 2 subunits; this bridge is implicated in subunit movement. Contacts the P site tRNA; the 5S rRNA and some of its associated proteins might help stabilize positioning of ribosome-bound tRNAs. This Streptococcus thermophilus (strain ATCC BAA-491 / LMD-9) protein is Large ribosomal subunit protein uL5.